We begin with the raw amino-acid sequence, 495 residues long: Anaerobic nitric oxide reductase flavorubredoxin (495 aa).

A zinc metallo-hydrolase region spans residues 30 to 210 (HKGTSYNSYL…PFSPLVTAKI (181 aa)). Residues His-79, Glu-81, Asp-83, His-147, Asp-166, and His-227 each coordinate Fe cation. The region spanning 254–393 (ITLFYDSMSN…ECREHGRQLA (140 aa)) is the Flavodoxin-like domain. FMN is bound by residues 260-264 (SMSNN) and 342-369 (AFGS…DISI). The region spanning 438 to 489 (DQAMLCTVCQWVYDPAQGEPDQLVAPGTPWAQVPDSFLCPGCGIGKEVFEPC) is the Rubredoxin-like domain. Fe cation-binding residues include Cys-443, Cys-446, Cys-476, and Cys-479.

The protein in the N-terminal section; belongs to the zinc metallo-hydrolase group 3 family. Homotetramer. Requires Fe cation as cofactor. It depends on FMN as a cofactor.

It is found in the cytoplasm. Its pathway is nitrogen metabolism; nitric oxide reduction. Its function is as follows. Anaerobic nitric oxide reductase; uses NADH to detoxify nitric oxide (NO), protecting several 4Fe-4S NO-sensitive enzymes. Has at least 2 reductase partners, only one of which (NorW, flavorubredoxin reductase) has been identified. NO probably binds to the di-iron center; electrons enter from the NorW at rubredoxin and are transferred sequentially to the FMN center and the di-iron center. Also able to function as an aerobic oxygen reductase. This Aeromonas hydrophila subsp. hydrophila (strain ATCC 7966 / DSM 30187 / BCRC 13018 / CCUG 14551 / JCM 1027 / KCTC 2358 / NCIMB 9240 / NCTC 8049) protein is Anaerobic nitric oxide reductase flavorubredoxin.